A 908-amino-acid polypeptide reads, in one-letter code: Probable disease resistance RPP8-like protein 4 (908 aa).

Residues 15–57 (DLLSRESERLQGIDEQLDGLKRQLRSLQSLLKDADAKKHGSDR) adopt a coiled-coil conformation. An NB-ARC domain is found at 146–459 (RQRVQREIRQ…AEGIYDGSTI (314 aa)). 192–199 (GMGGIGKT) contacts ATP. LRR repeat units follow at residues 575–599 (LTLL…SIGG), 600–623 (LIHL…MRNL), and 842–867 (MPCL…KYIT).

The protein belongs to the disease resistance NB-LRR family. RPP8/HRT subfamily.

Potential disease resistance protein. The polypeptide is Probable disease resistance RPP8-like protein 4 (RPP8L4) (Arabidopsis thaliana (Mouse-ear cress)).